Reading from the N-terminus, the 359-residue chain is Cyclin puc1 (359 aa).

The protein belongs to the cyclin family.

In terms of biological role, function in exit from the mitotic cycle. Contributes to negative regulation of the timing of sexual development in fission yeast, and functions at the transition between cycling and non-cycling cells. Interacts with protein kinase A. This Schizosaccharomyces pombe (strain 972 / ATCC 24843) (Fission yeast) protein is Cyclin puc1 (puc1).